The following is a 183-amino-acid chain: Anterior gradient protein 1 (183 aa).

Positions 1 to 18 (MQAGLSLVCLVLLCSALG) are cleaved as a signal peptide.

This sequence belongs to the AGR family. From stage 18 (neurula) onward, expressed in the cement gland until it degenerates. More weakly expressed in the adjacent hatching gland.

It is found in the secreted. Its function is as follows. Does not appear to be required for cement gland formation. The protein is Anterior gradient protein 1 (ag1) of Xenopus laevis (African clawed frog).